We begin with the raw amino-acid sequence, 362 residues long: Peptide chain release factor 1 (362 aa).

N5-methylglutamine is present on Q235.

The protein belongs to the prokaryotic/mitochondrial release factor family. Methylated by PrmC. Methylation increases the termination efficiency of RF1.

The protein localises to the cytoplasm. In terms of biological role, peptide chain release factor 1 directs the termination of translation in response to the peptide chain termination codons UAG and UAA. This is Peptide chain release factor 1 from Variovorax paradoxus (strain S110).